Consider the following 376-residue polypeptide: Histidinol dehydrogenase (376 aa).

Tyrosine 100 and asparagine 182 together coordinate NAD(+). Substrate contacts are provided by serine 205, glutamine 227, and histidine 230. Positions 227 and 230 each coordinate Zn(2+). Catalysis depends on proton acceptor residues glutamate 275 and histidine 276. Substrate-binding residues include histidine 276, aspartate 309, glutamate 363, and histidine 368. Aspartate 309 is a Zn(2+) binding site. Residue histidine 368 participates in Zn(2+) binding.

This sequence belongs to the histidinol dehydrogenase family. Zn(2+) is required as a cofactor.

The catalysed reaction is L-histidinol + 2 NAD(+) + H2O = L-histidine + 2 NADH + 3 H(+). It functions in the pathway amino-acid biosynthesis; L-histidine biosynthesis; L-histidine from 5-phospho-alpha-D-ribose 1-diphosphate: step 9/9. In terms of biological role, catalyzes the sequential NAD-dependent oxidations of L-histidinol to L-histidinaldehyde and then to L-histidine. This is Histidinol dehydrogenase from Thermococcus kodakarensis (strain ATCC BAA-918 / JCM 12380 / KOD1) (Pyrococcus kodakaraensis (strain KOD1)).